Reading from the N-terminus, the 247-residue chain is Peroxisomal membrane protein 11A (247 aa).

At 1-83 (MDAFIRFTNQ…SVRATDLVPR (83 aa)) the chain is on the cytoplasmic side. A helical transmembrane segment spans residues 84-105 (ICLTLASLNRVIYFICDTVLFV). At 106–219 (RSTGLASGVN…DQLGIYKSNP (114 aa)) the chain is on the lumenal side. The helical transmembrane segment at 220–239 (GIIGLGGLVSSVAGIITVAY) threads the bilayer. The interval 220–239 (GIIGLGGLVSSVAGIITVAY) is required for homodimerization, interaction with PEX11G, and peroxisomal localization. Over 240-247 (PQMKLKTQ) the chain is Cytoplasmic.

This sequence belongs to the peroxin-11 family. Homodimer. Heterodimer with PEX11G. Probably interacts with COPB2 and COPA. Interacts with PEX19. Interacts with FIS1.

The protein localises to the peroxisome membrane. Its function is as follows. May be involved in peroxisomal proliferation and may regulate peroxisomes division. May mediate binding of coatomer proteins to the peroxisomal membrane. Promotes membrane protrusion and elongation on the peroxisomal surface. This Bos taurus (Bovine) protein is Peroxisomal membrane protein 11A (PEX11A).